The following is a 194-amino-acid chain: Outer-membrane lipoprotein LolB (194 aa).

A signal peptide spans 1 to 18 (MTLFLRIFTFGCLLLLAG). Cys-19 carries N-palmitoyl cysteine lipidation. The S-diacylglycerol cysteine moiety is linked to residue Cys-19.

Belongs to the LolB family. Monomer.

It localises to the cell outer membrane. Its function is as follows. Plays a critical role in the incorporation of lipoproteins in the outer membrane after they are released by the LolA protein. The chain is Outer-membrane lipoprotein LolB from Aeromonas salmonicida (strain A449).